Reading from the N-terminus, the 85-residue chain is COMM domain-containing protein 6 (85 aa).

Methionine 1 is subject to N-acetylmethionine. In terms of domain architecture, COMM spans 18-85 (QLIDFEWKLG…KEIAAIIETV (68 aa)).

The protein belongs to the COMM domain-containing protein 6 family. As to quaternary structure, component of the commander complex consisting of the CCC subcomplex and the retriever subcomplex. Component of the CCC (COMMD/CCDC22/CCDC93) subcomplex consisting of COMMD1, COMMD2, COMMD3, COMMD4, COMMD5, COMMD6, COMMD7, COMMD8, COMMD9, COMMD10, CCDC22 and CCDC93; within the complex forms a heterodimer with COMMD1. May form a homodimer with isoform 1. Interacts with RELA, RELB, NFKB1/p105. Does not interact with NFKBIB. Interacts with CCDC22, CCDC93, SCNN1B, CUL4A.

Its subcellular location is the nucleus. The protein resides in the cytoplasm. In terms of biological role, scaffold protein in the commander complex that is essential for endosomal recycling of transmembrane cargos; the commander complex is composed of the CCC subcomplex and the retriever subcomplex. May modulate activity of cullin-RING E3 ubiquitin ligase (CRL) complexes. Down-regulates activation of NF-kappa-B. Inhibits TNF-induced NFKB1 activation. This is COMM domain-containing protein 6 (COMMD6) from Bos taurus (Bovine).